The sequence spans 394 residues: Cysteine protease ATG4B (394 aa).

Cysteine 74 functions as the Nucleophile in the catalytic mechanism. Catalysis depends on residues aspartate 280 and histidine 282. The short motif at 389-392 is the LIR element; sequence FEIL.

It belongs to the peptidase C54 family.

Its subcellular location is the cytoplasm. It localises to the cytosol. The protein resides in the cytoplasmic vesicle. The protein localises to the autophagosome. It is found in the endoplasmic reticulum. Its subcellular location is the mitochondrion. It catalyses the reaction [protein]-C-terminal L-amino acid-glycyl-phosphatidylethanolamide + H2O = [protein]-C-terminal L-amino acid-glycine + a 1,2-diacyl-sn-glycero-3-phosphoethanolamine. The catalysed reaction is [protein]-C-terminal L-amino acid-glycyl-phosphatidylserine + H2O = [protein]-C-terminal L-amino acid-glycine + a 1,2-diacyl-sn-glycero-3-phospho-L-serine. Its function is as follows. Cysteine protease that plays a key role in autophagy by mediating both proteolytic activation and delipidation of ATG8 family proteins. Required for canonical autophagy (macroautophagy), non-canonical autophagy as well as for mitophagy. The protease activity is required for proteolytic activation of ATG8 family proteins: cleaves the C-terminal amino acid of ATG8 proteins to reveal a C-terminal glycine. Exposure of the glycine at the C-terminus is essential for ATG8 proteins conjugation to phosphatidylethanolamine (PE) and insertion to membranes, which is necessary for autophagy. Protease activity is also required to counteract formation of high-molecular weight conjugates of ATG8 proteins (ATG8ylation): acts as a deubiquitinating-like enzyme that removes ATG8 conjugated to other proteins, such as ATG3. In addition to the protease activity, also mediates delipidation of ATG8 family proteins. Catalyzes delipidation of PE-conjugated forms of ATG8 proteins during macroautophagy. Also involved in non-canonical autophagy, a parallel pathway involving conjugation of ATG8 proteins to single membranes at endolysosomal compartments, by catalyzing delipidation of ATG8 proteins conjugated to phosphatidylserine (PS). In Danio rerio (Zebrafish), this protein is Cysteine protease ATG4B.